Here is a 184-residue protein sequence, read N- to C-terminus: GTP cyclohydrolase 1 (184 aa).

Zn(2+) is bound by residues C75, H78, and C146.

Belongs to the GTP cyclohydrolase I family. In terms of assembly, toroid-shaped homodecamer, composed of two pentamers of five dimers.

The enzyme catalyses GTP + H2O = 7,8-dihydroneopterin 3'-triphosphate + formate + H(+). It functions in the pathway cofactor biosynthesis; 7,8-dihydroneopterin triphosphate biosynthesis; 7,8-dihydroneopterin triphosphate from GTP: step 1/1. The sequence is that of GTP cyclohydrolase 1 from Pseudoalteromonas atlantica (strain T6c / ATCC BAA-1087).